The following is a 75-amino-acid chain: Pi-hexatoxin-Hi1d (75 aa).

6 disulfide bridges follow: Cys3–Cys18, Cys10–Cys23, Cys17–Cys33, Cys40–Cys55, Cys47–Cys60, and Cys54–Cys71. Domain repeat units follow at residues Cys3 to Cys33 and Cys40 to Cys71. The segment at Cys3–Cys71 is 2 X approximate repeats with cysteine pattern C-C-CC-C-C.

This sequence belongs to the psalmotoxin-1 family. Double-knot toxin subfamily. In terms of tissue distribution, expressed by the venom gland.

The protein localises to the secreted. In terms of biological role, this toxin potently and selectively inhibits ASIC1a, an isoform of the gene ASIC1. It incompletely inhibits ASIC1a activation in a pH-independent and slowly reversible manner. This toxin acts by binding to and stabilizing the closed state of the channel, thereby impeding the transition into a conducting state. This toxin may bind to the acidic pocket of ASIC1a, since mutation of a key residue of this pocket (Arg-350) abolishes the ability of the toxin to inhibit ASIC1a. In vivo, this toxin protects the brain from neuronal injury when administered up to 8 hours after stroke onset. The sequence is that of Pi-hexatoxin-Hi1d from Hadronyche infensa (Fraser island funnel-web spider).